The following is a 65-amino-acid chain: uncharacterized protein (65 aa).

This is an uncharacterized protein from Homo sapiens (Human).